The chain runs to 166 residues: Large ribosomal subunit protein uL10 (166 aa).

Belongs to the universal ribosomal protein uL10 family. As to quaternary structure, part of the ribosomal stalk of the 50S ribosomal subunit. The N-terminus interacts with L11 and the large rRNA to form the base of the stalk. The C-terminus forms an elongated spine to which L12 dimers bind in a sequential fashion forming a multimeric L10(L12)X complex.

Forms part of the ribosomal stalk, playing a central role in the interaction of the ribosome with GTP-bound translation factors. The protein is Large ribosomal subunit protein uL10 of Bacillus cereus (strain 03BB102).